Here is a 237-residue protein sequence, read N- to C-terminus: MQKKAELYRGKAKTVYTTESSDYLILEFRNDTSALDGQRIEQFDRKGMVNNKFNYFIMNKLEEAGIPTQMERLLSDNEVLVKKLDMVPVECVIRNRAAGSLVKRLGIEEGTVLNPPIFDLFLKDDARHDPMVNESYCETFGWVSKENLAEMKRLSYKANDVLSELFDKAGLILVDFKLEFGLFNGKVVLGDEFSPDGSRLWDKNTLDKMDKDRFRQSLGGLIEAYEEVARRIGVSLD.

This sequence belongs to the SAICAR synthetase family.

The enzyme catalyses 5-amino-1-(5-phospho-D-ribosyl)imidazole-4-carboxylate + L-aspartate + ATP = (2S)-2-[5-amino-1-(5-phospho-beta-D-ribosyl)imidazole-4-carboxamido]succinate + ADP + phosphate + 2 H(+). Its pathway is purine metabolism; IMP biosynthesis via de novo pathway; 5-amino-1-(5-phospho-D-ribosyl)imidazole-4-carboxamide from 5-amino-1-(5-phospho-D-ribosyl)imidazole-4-carboxylate: step 1/2. The chain is Phosphoribosylaminoimidazole-succinocarboxamide synthase from Proteus mirabilis (strain HI4320).